The following is a 159-amino-acid chain: Mating-type P-specific polypeptide Pi (159 aa).

The homeobox; TALE-type; partial DNA-binding region spans 103-159; it reads MTTVRGQCSKCTKPHLMRWLLLHYDNPYPSNSEFYDLSAATGLTRTQLRNWFSNRRR.

The protein belongs to the TALE/M-ATYP homeobox family.

It localises to the nucleus. Mating type proteins are sequence specific DNA-binding proteins that act as master switches in yeast differentiation by controlling gene expression in a cell type-specific fashion. Required for meiosis, but plays no role in conjugation. This Schizosaccharomyces kambucha (Fission yeast) protein is Mating-type P-specific polypeptide Pi (matPi).